The following is a 98-amino-acid chain: MSIVYINIFLAFIMSLLGMLIYRSHLMSSLLCLEGMMLSLFVMITLIILNNHFTLASMTPIILLVFAACEAALGLSLLVMVSNTYGNDYVQNLNLLQC.

3 helical membrane passes run 1-21 (MSIVYINIFLAFIMSLLGMLI), 29-49 (SLLCLEGMMLSLFVMITLIIL), and 61-81 (IILLVFAACEAALGLSLLVMV).

It belongs to the complex I subunit 4L family. Core subunit of respiratory chain NADH dehydrogenase (Complex I) which is composed of 45 different subunits.

The protein localises to the mitochondrion inner membrane. It catalyses the reaction a ubiquinone + NADH + 5 H(+)(in) = a ubiquinol + NAD(+) + 4 H(+)(out). Functionally, core subunit of the mitochondrial membrane respiratory chain NADH dehydrogenase (Complex I) which catalyzes electron transfer from NADH through the respiratory chain, using ubiquinone as an electron acceptor. Part of the enzyme membrane arm which is embedded in the lipid bilayer and involved in proton translocation. In Herpestes javanicus (Small Indian mongoose), this protein is NADH-ubiquinone oxidoreductase chain 4L (MT-ND4L).